Here is a 624-residue protein sequence, read N- to C-terminus: Acidic juvenile hormone-suppressible protein 1 (624 aa).

A signal peptide spans 1–18 (MARLVLCALALLVAGGLA). Residues N75 and N478 are each glycosylated (N-linked (GlcNAc...) asparagine).

The protein belongs to the hemocyanin family.

It is found in the secreted. It localises to the extracellular space. The chain is Acidic juvenile hormone-suppressible protein 1 (AJSP-1) from Trichoplusia ni (Cabbage looper).